Reading from the N-terminus, the 110-residue chain is Large ribosomal subunit protein uL22 (110 aa).

The protein belongs to the universal ribosomal protein uL22 family. In terms of assembly, part of the 50S ribosomal subunit.

This protein binds specifically to 23S rRNA; its binding is stimulated by other ribosomal proteins, e.g. L4, L17, and L20. It is important during the early stages of 50S assembly. It makes multiple contacts with different domains of the 23S rRNA in the assembled 50S subunit and ribosome. Its function is as follows. The globular domain of the protein is located near the polypeptide exit tunnel on the outside of the subunit, while an extended beta-hairpin is found that lines the wall of the exit tunnel in the center of the 70S ribosome. This chain is Large ribosomal subunit protein uL22, found in Syntrophotalea carbinolica (strain DSM 2380 / NBRC 103641 / GraBd1) (Pelobacter carbinolicus).